A 360-amino-acid polypeptide reads, in one-letter code: GDSL esterase/lipase At2g31550 (360 aa).

Residues 1-27 (MSTSKAITLTLFITTTLLASCDAAANA) form the signal peptide. Residue Asn-26 is glycosylated (N-linked (GlcNAc...) asparagine). Ser-42 acts as the Nucleophile in catalysis. N-linked (GlcNAc...) asparagine glycosylation is found at Asn-104 and Asn-326. Active-site residues include Asp-334 and His-337.

It belongs to the 'GDSL' lipolytic enzyme family.

It is found in the secreted. This chain is GDSL esterase/lipase At2g31550, found in Arabidopsis thaliana (Mouse-ear cress).